The primary structure comprises 212 residues: Imidazole glycerol phosphate synthase subunit HisH (212 aa).

In terms of domain architecture, Glutamine amidotransferase type-1 spans 3 to 211 (LIAVIDYDMG…VQQVQKLALV (209 aa)). The Nucleophile role is filled by Cys-81. Catalysis depends on residues His-186 and Glu-188.

In terms of assembly, heterodimer of HisH and HisF.

Its subcellular location is the cytoplasm. The catalysed reaction is 5-[(5-phospho-1-deoxy-D-ribulos-1-ylimino)methylamino]-1-(5-phospho-beta-D-ribosyl)imidazole-4-carboxamide + L-glutamine = D-erythro-1-(imidazol-4-yl)glycerol 3-phosphate + 5-amino-1-(5-phospho-beta-D-ribosyl)imidazole-4-carboxamide + L-glutamate + H(+). It catalyses the reaction L-glutamine + H2O = L-glutamate + NH4(+). It participates in amino-acid biosynthesis; L-histidine biosynthesis; L-histidine from 5-phospho-alpha-D-ribose 1-diphosphate: step 5/9. In terms of biological role, IGPS catalyzes the conversion of PRFAR and glutamine to IGP, AICAR and glutamate. The HisH subunit catalyzes the hydrolysis of glutamine to glutamate and ammonia as part of the synthesis of IGP and AICAR. The resulting ammonia molecule is channeled to the active site of HisF. The chain is Imidazole glycerol phosphate synthase subunit HisH from Microcystis aeruginosa (strain NIES-843 / IAM M-2473).